A 298-amino-acid polypeptide reads, in one-letter code: Transcription factor RAX2 (298 aa).

2 HTH myb-type domains span residues 9 to 62 and 63 to 117; these read KANV…LNYL and RPNI…KKKL. 2 DNA-binding regions (H-T-H motif) span residues 38–62 and 90–113; these read WIAL…LNYL and WSVI…NTKL.

In terms of tissue distribution, ubiquitous, with higher levels in roots, flowers, and shoot tips. Found in all cells of the shoot tips.

Its subcellular location is the nucleus. In terms of biological role, transcription activator. Positively regulates axillary meristems (AMs) formation and development, especially during inflorescence. This is Transcription factor RAX2 (RAX2) from Arabidopsis thaliana (Mouse-ear cress).